A 244-amino-acid chain; its full sequence is tRNA (guanine-N(7)-)-methyltransferase (244 aa).

The span at 1–10 shows a compositional bias: polar residues; the sequence is MSDTPQSPAQ. The interval 1-20 is disordered; that stretch reads MSDTPQSPAQDSLAEHDEAR. The S-adenosyl-L-methionine site is built by Glu74, Glu99, Asp126, and Asp149. Residue Asp149 is part of the active site. Substrate is bound by residues Lys153, Asp185, and 222–225; that span reads TKFE.

Belongs to the class I-like SAM-binding methyltransferase superfamily. TrmB family.

It carries out the reaction guanosine(46) in tRNA + S-adenosyl-L-methionine = N(7)-methylguanosine(46) in tRNA + S-adenosyl-L-homocysteine. Its pathway is tRNA modification; N(7)-methylguanine-tRNA biosynthesis. In terms of biological role, catalyzes the formation of N(7)-methylguanine at position 46 (m7G46) in tRNA. The sequence is that of tRNA (guanine-N(7)-)-methyltransferase from Pseudomonas paraeruginosa (strain DSM 24068 / PA7) (Pseudomonas aeruginosa (strain PA7)).